The chain runs to 585 residues: Arginine--tRNA ligase (585 aa).

The short motif at 131–141 (ANPTGPMHVGH) is the 'HIGH' region element.

This sequence belongs to the class-I aminoacyl-tRNA synthetase family. As to quaternary structure, monomer.

The protein resides in the cytoplasm. It carries out the reaction tRNA(Arg) + L-arginine + ATP = L-arginyl-tRNA(Arg) + AMP + diphosphate. This is Arginine--tRNA ligase from Brucella ovis (strain ATCC 25840 / 63/290 / NCTC 10512).